Reading from the N-terminus, the 113-residue chain is Antimicrobial peptide microplusin (113 aa).

An N-terminal signal peptide occupies residues 1-19 (MKSLLVLALLAFGAVLVSA). Cystine bridges form between cysteine 25-cysteine 71, cysteine 38-cysteine 99, and cysteine 60-cysteine 65.

Its subcellular location is the secreted. Its function is as follows. Has bacteriostatic activity against Gram-positive bacteria, but not against Gram-negative bacteria. Has fungistatic activity against some but not all fungi. Binds and sequesters copper and iron ions. Copper-chelating activity is crucial for antimicrobial activity against M.luteus. The chain is Antimicrobial peptide microplusin from Argas monolakensis (Mono lake bird tick).